A 921-amino-acid polypeptide reads, in one-letter code: Sodium/calcium exchanger 2 (921 aa).

The N-terminal stretch at 1-20 (MAPLALVGVALLLGAPHCLG) is a signal peptide. At 21-68 (EATPTPSLPPPPANDSDASPGGCQGSYRCQPGVLLPVWEPDDPSLGDK) the chain is on the extracellular side. Residues 23 to 42 (TPTPSLPPPPANDSDASPGG) are disordered. Residue asparagine 34 is glycosylated (N-linked (GlcNAc...) asparagine). The chain crosses the membrane as a helical span at residues 69–90 (AARAVVYFVAMVYMFLGLSIIA). At 91–130 (DRFMASIEVITSKEKEITITKANGETSVGTVRIWNETVSN) the chain is on the cytoplasmic side. A helical transmembrane segment spans residues 131 to 152 (LTLMALGSSAPEILLSVIEVCG). One copy of the Alpha-1 repeat lies at 135–175 (ALGSSAPEILLSVIEVCGHNFQAGELGPGTIVGSAAFNMFV). Topologically, residues 153 to 164 (HNFQAGELGPGT) are extracellular. The chain crosses the membrane as a helical span at residues 165-185 (IVGSAAFNMFVVIAVCVYVIP). At 186 to 196 (AGESRKIKHLR) the chain is on the cytoplasmic side. The helical transmembrane segment at 197–219 (VFFVTASWSIFAYVWLYLILAVF) threads the bilayer. The Extracellular portion of the chain corresponds to 220–222 (SPG). A helical membrane pass occupies residues 223–246 (VVQVWEALLTLVFFPVCVVFAWMA). The Cytoplasmic portion of the chain corresponds to 247–720 (DKRLLFYKYV…DGSREERLPS (474 aa)). The interval 248–267 (KRLLFYKYVYKRYRTDPRSG) is putative calmodulin-binding region. The segment at 372 to 391 (AADAARRPGANDGAPDDEDD) is disordered. 2 consecutive Calx-beta domains span residues 384–483 (GAPD…VRLL) and 512–612 (ATVT…IELG). Positions 407, 443, 468, 469, 471, 473, 476, 518, 519, 520, 536, 598, 599, and 600 each coordinate Ca(2+). The residue at position 622 (serine 622) is a Phosphoserine. Position 665 (glutamate 665) interacts with Ca(2+). Residues 721–740 (CFDYVMHFLTVFWKVLFACL) form a helical membrane-spanning segment. Residues 741–747 (PPTEYCH) lie on the Extracellular side of the membrane. Residues 748–770 (GWACFGVCILVIGLLTALIGDLA) traverse the membrane as a helical segment. At 771–772 (SH) the chain is on the cytoplasmic side. The helical transmembrane segment at 773 to 791 (FGCTVGLKDSVNAVVFVAL) threads the bilayer. An Alpha-2 repeat occupies 790 to 826 (ALGTSIPDTFASKVAALQDQCADASIGNVTGSNAVNV). Residues 792 to 822 (GTSIPDTFASKVAALQDQCADASIGNVTGSN) are Extracellular-facing. The N-linked (GlcNAc...) asparagine glycan is linked to asparagine 817. Residues 823–843 (AVNVFLGLGVAWSVAAVYWAV) form a helical membrane-spanning segment. Topologically, residues 844 to 854 (QGRPFEVRTGT) are cytoplasmic. A helical transmembrane segment spans residues 855-875 (LAFSVTLFTVFAFVGIAVLLY). Residues 876–892 (RRRPHIGGELGGPRGPK) lie on the Extracellular side of the membrane. A helical membrane pass occupies residues 893 to 909 (LATTALFLGLWFLYILF). Residues 910 to 921 (ASLEAYCHIRGF) are Cytoplasmic-facing.

This sequence belongs to the Ca(2+):cation antiporter (CaCA) (TC 2.A.19) family. SLC8 subfamily. Detected in neocortex and hippocampus on pyramidal cells, astrocyte processes and dendrites (at protein level). Brain and skeletal muscle.

It localises to the cell membrane. Its subcellular location is the basolateral cell membrane. The protein resides in the perikaryon. The protein localises to the cell projection. It is found in the dendrite. It localises to the dendritic spine. It catalyses the reaction Ca(2+)(in) + 3 Na(+)(out) = Ca(2+)(out) + 3 Na(+)(in). Its activity is regulated as follows. Calcium transport is down-regulated by Na(+) and stimulated by Ca(2+). Its function is as follows. Mediates the electrogenic exchange of Ca(2+) against Na(+) ions across the cell membrane, and thereby contributes to the regulation of cytoplasmic Ca(2+) levels and Ca(2+)-dependent cellular processes. Contributes to cellular Ca(2+) homeostasis in excitable cells. Contributes to the rapid decrease of cytoplasmic Ca(2+) levels back to baseline after neuronal activation, and thereby contributes to modulate synaptic plasticity, learning and memory. Plays a role in regulating urinary Ca(2+) and Na(+) excretion. The chain is Sodium/calcium exchanger 2 (Slc8a2) from Rattus norvegicus (Rat).